We begin with the raw amino-acid sequence, 298 residues long: Ribosomal RNA small subunit methyltransferase H (298 aa).

S-adenosyl-L-methionine is bound by residues 35 to 37 (GGH), D55, F82, D100, and Q107.

Belongs to the methyltransferase superfamily. RsmH family.

It is found in the cytoplasm. The enzyme catalyses cytidine(1402) in 16S rRNA + S-adenosyl-L-methionine = N(4)-methylcytidine(1402) in 16S rRNA + S-adenosyl-L-homocysteine + H(+). Specifically methylates the N4 position of cytidine in position 1402 (C1402) of 16S rRNA. The protein is Ribosomal RNA small subunit methyltransferase H of Chlamydia abortus (strain DSM 27085 / S26/3) (Chlamydophila abortus).